Consider the following 123-residue polypeptide: Late histone H2B.L3 (123 aa).

Residues 1 to 10 (MPAKAQAAGK) show a composition bias toward low complexity. The interval 1 to 32 (MPAKAQAAGKKGSKKAKAPKPSGDKKRRRKRK) is disordered. S110 carries an O-linked (GlcNAc) serine glycan. K118 is covalently cross-linked (Glycyl lysine isopeptide (Lys-Gly) (interchain with G-Cter in ubiquitin)).

It belongs to the histone H2B family. The nucleosome is a histone octamer containing two molecules each of H2A, H2B, H3 and H4 assembled in one H3-H4 heterotetramer and two H2A-H2B heterodimers. The octamer wraps approximately 147 bp of DNA. In terms of processing, monoubiquitination of Lys-118 gives a specific tag for epigenetic transcriptional activation and is also prerequisite for histone H3 'Lys-4' and 'Lys-79' methylation. GlcNAcylation at Ser-110 promotes monoubiquitination of Lys-118. It fluctuates in response to extracellular glucose, and associates with transcribed genes.

It is found in the nucleus. The protein localises to the chromosome. Core component of nucleosome. Nucleosomes wrap and compact DNA into chromatin, limiting DNA accessibility to the cellular machineries which require DNA as a template. Histones thereby play a central role in transcription regulation, DNA repair, DNA replication and chromosomal stability. DNA accessibility is regulated via a complex set of post-translational modifications of histones, also called histone code, and nucleosome remodeling. The polypeptide is Late histone H2B.L3 (Strongylocentrotus purpuratus (Purple sea urchin)).